Here is an 89-residue protein sequence, read N- to C-terminus: Small ribosomal subunit protein uS15 (89 aa).

The disordered stretch occupies residues 1–24 (MSLNAEQKSEIVEQFRRSPSDTGS). A compositionally biased stretch (basic and acidic residues) spans 7-19 (QKSEIVEQFRRSP).

The protein belongs to the universal ribosomal protein uS15 family. In terms of assembly, part of the 30S ribosomal subunit. Forms a bridge to the 50S subunit in the 70S ribosome, contacting the 23S rRNA.

Its function is as follows. One of the primary rRNA binding proteins, it binds directly to 16S rRNA where it helps nucleate assembly of the platform of the 30S subunit by binding and bridging several RNA helices of the 16S rRNA. Functionally, forms an intersubunit bridge (bridge B4) with the 23S rRNA of the 50S subunit in the ribosome. This chain is Small ribosomal subunit protein uS15, found in Halorhodospira halophila (strain DSM 244 / SL1) (Ectothiorhodospira halophila (strain DSM 244 / SL1)).